A 128-amino-acid chain; its full sequence is MFYSIVAIFVGAGFGAVLRWFLALALNEFFPAVPLGTLAANLIGGYVIGVAAVVFTARVGLPPEWRLFVITGFLGGLTTFSTYSVEVMTHAVQGEFGWAIAVAALHLTGSFTLTALGMWTARAWFAAA.

A run of 4 helical transmembrane segments spans residues 5–25, 35–55, 67–87, and 96–116; these read IVAI…LALA, LGTL…AVVF, LFVI…SVEV, and FGWA…LTAL. Residues Gly-75 and Thr-78 each contribute to the Na(+) site.

Belongs to the fluoride channel Fluc/FEX (TC 1.A.43) family.

The protein localises to the cell inner membrane. It catalyses the reaction fluoride(in) = fluoride(out). Its activity is regulated as follows. Na(+) is not transported, but it plays an essential structural role and its presence is essential for fluoride channel function. Fluoride-specific ion channel. Important for reducing fluoride concentration in the cell, thus reducing its toxicity. The sequence is that of Fluoride-specific ion channel FluC from Burkholderia ambifaria (strain MC40-6).